The chain runs to 85 residues: Putative septation protein SpoVG (85 aa).

Belongs to the SpoVG family.

Its function is as follows. Could be involved in septation. In Archaeoglobus fulgidus (strain ATCC 49558 / DSM 4304 / JCM 9628 / NBRC 100126 / VC-16), this protein is Putative septation protein SpoVG.